The sequence spans 213 residues: Inactive ribonuclease-like protein 10 (213 aa).

The first 24 residues, 1–24 (MKLTLVQIFFMMLLLLLGLGMGLG), serve as a signal peptide directing secretion. N131 is a glycosylation site (N-linked (GlcNAc...) asparagine).

The protein belongs to the pancreatic ribonuclease family. Post-translationally, the N-terminus is blocked. Glycosylated. In terms of tissue distribution, male-specific expression in proximal caput of the epididymis.

Its subcellular location is the secreted. Secreted proximal epididymal protein required for post-testicular sperm maturation and male fertility. May be involved in sperm adhesion to the egg zona pellucida. Does not have ribonuclease activity. The protein is Inactive ribonuclease-like protein 10 (RNASE10) of Equus caballus (Horse).